The chain runs to 71 residues: Sec-independent protein translocase protein TatA (71 aa).

Residues 9 to 29 form a helical membrane-spanning segment; the sequence is LLLILAIVVILFGASRLPALG. A disordered region spans residues 43–71; the sequence is FGGEDEKPTASGNGSTPTQSSSDQGSKQA. Polar residues predominate over residues 52–71; it reads ASGNGSTPTQSSSDQGSKQA.

This sequence belongs to the TatA/E family. In terms of assembly, the Tat system comprises two distinct complexes: a TatABC complex, containing multiple copies of TatA, TatB and TatC subunits, and a separate TatA complex, containing only TatA subunits. Substrates initially bind to the TatABC complex, which probably triggers association of the separate TatA complex to form the active translocon.

It localises to the cell inner membrane. Its function is as follows. Part of the twin-arginine translocation (Tat) system that transports large folded proteins containing a characteristic twin-arginine motif in their signal peptide across membranes. TatA could form the protein-conducting channel of the Tat system. In Anaeromyxobacter dehalogenans (strain 2CP-C), this protein is Sec-independent protein translocase protein TatA.